A 1163-amino-acid chain; its full sequence is Pesticidal crystal protein Cry26Aa (1163 aa).

The protein belongs to the delta endotoxin family.

Its function is as follows. Promotes colloidosmotic lysis by binding to the midgut epithelial cells of insects. The sequence is that of Pesticidal crystal protein Cry26Aa (cry26Aa) from Bacillus thuringiensis subsp. finitimus.